Reading from the N-terminus, the 405-residue chain is Cytoplasmic tRNA 2-thiolation protein 2 (405 aa).

This sequence belongs to the CTU2/NCS2 family.

The protein resides in the cytoplasm. It functions in the pathway tRNA modification; 5-methoxycarbonylmethyl-2-thiouridine-tRNA biosynthesis. Its function is as follows. Plays a central role in 2-thiolation of mcm(5)S(2)U at tRNA wobble positions of tRNA(Lys), tRNA(Glu) and tRNA(Gln). May act by forming a heterodimer with NCS6/CTU1 that ligates sulfur from thiocarboxylated URM1 onto the uridine of tRNAs at wobble position. The polypeptide is Cytoplasmic tRNA 2-thiolation protein 2 (Drosophila melanogaster (Fruit fly)).